A 37-amino-acid chain; its full sequence is Myo-inositol-binding protein (37 aa).

Belongs to the bacterial solute-binding protein 2 family.

The protein resides in the periplasm. In Pseudomonas sp, this protein is Myo-inositol-binding protein.